Consider the following 114-residue polypeptide: Large ribosomal subunit protein uL22 (114 aa).

Belongs to the universal ribosomal protein uL22 family. In terms of assembly, part of the 50S ribosomal subunit.

In terms of biological role, this protein binds specifically to 23S rRNA; its binding is stimulated by other ribosomal proteins, e.g. L4, L17, and L20. It is important during the early stages of 50S assembly. It makes multiple contacts with different domains of the 23S rRNA in the assembled 50S subunit and ribosome. Its function is as follows. The globular domain of the protein is located near the polypeptide exit tunnel on the outside of the subunit, while an extended beta-hairpin is found that lines the wall of the exit tunnel in the center of the 70S ribosome. This is Large ribosomal subunit protein uL22 from Streptococcus gordonii (strain Challis / ATCC 35105 / BCRC 15272 / CH1 / DL1 / V288).